Here is a 218-residue protein sequence, read N- to C-terminus: OPA3-like protein (218 aa).

Residues 129–179 adopt a coiled-coil conformation; the sequence is NEIMEKQFVLQKKKNELQSSTEEIDSTEKDFDELHKVILKVERELHTLRQN. The segment at 175–218 is disordered; that stretch reads TLRQNTPSQNEQAEATPSKEIPRETVSEKADHPPSSNTKSVSTG. Positions 176–189 are enriched in polar residues; the sequence is LRQNTPSQNEQAEA. Over residues 194-206 the composition is skewed to basic and acidic residues; sequence EIPRETVSEKADH. A compositionally biased stretch (polar residues) spans 208–218; that stretch reads PSSNTKSVSTG.

The protein belongs to the OPA3 family.

In Schizosaccharomyces pombe (strain 972 / ATCC 24843) (Fission yeast), this protein is OPA3-like protein.